A 342-amino-acid polypeptide reads, in one-letter code: GTPase Obg (342 aa).

Residues 1–159 enclose the Obg domain; it reads MKFLDLCKVY…RTIWLRLKLI (159 aa). One can recognise an OBG-type G domain in the interval 160 to 327; sequence ADAGLLGLPN…VLRALWAEID (168 aa). GTP is bound by residues 166 to 173, 191 to 195, 212 to 215, 279 to 282, and 308 to 310; these read GLPNAGKS, FTTLV, DIPG, NKID, and SGV. Positions 173 and 193 each coordinate Mg(2+).

Belongs to the TRAFAC class OBG-HflX-like GTPase superfamily. OBG GTPase family. Monomer. The cofactor is Mg(2+).

It localises to the cytoplasm. An essential GTPase which binds GTP, GDP and possibly (p)ppGpp with moderate affinity, with high nucleotide exchange rates and a fairly low GTP hydrolysis rate. Plays a role in control of the cell cycle, stress response, ribosome biogenesis and in those bacteria that undergo differentiation, in morphogenesis control. In Cereibacter sphaeroides (strain KD131 / KCTC 12085) (Rhodobacter sphaeroides), this protein is GTPase Obg.